Consider the following 370-residue polypeptide: Chaperone protein DnaJ (370 aa).

A J domain is found at Asp-5–Gly-69. A CR-type zinc finger spans residues Gly-128–Arg-210. Residues Cys-141, Cys-144, Cys-158, Cys-161, Cys-184, Cys-187, Cys-198, and Cys-201 each coordinate Zn(2+). CXXCXGXG motif repeat units lie at residues Cys-141–Gly-148, Cys-158–Gly-165, Cys-184–Gly-191, and Cys-198–Gly-205.

It belongs to the DnaJ family. In terms of assembly, homodimer. Requires Zn(2+) as cofactor.

It is found in the cytoplasm. In terms of biological role, participates actively in the response to hyperosmotic and heat shock by preventing the aggregation of stress-denatured proteins and by disaggregating proteins, also in an autonomous, DnaK-independent fashion. Unfolded proteins bind initially to DnaJ; upon interaction with the DnaJ-bound protein, DnaK hydrolyzes its bound ATP, resulting in the formation of a stable complex. GrpE releases ADP from DnaK; ATP binding to DnaK triggers the release of the substrate protein, thus completing the reaction cycle. Several rounds of ATP-dependent interactions between DnaJ, DnaK and GrpE are required for fully efficient folding. Also involved, together with DnaK and GrpE, in the DNA replication of plasmids through activation of initiation proteins. The polypeptide is Chaperone protein DnaJ (Halalkalibacterium halodurans (strain ATCC BAA-125 / DSM 18197 / FERM 7344 / JCM 9153 / C-125) (Bacillus halodurans)).